A 462-amino-acid chain; its full sequence is Asparagine--tRNA ligase (462 aa).

The protein belongs to the class-II aminoacyl-tRNA synthetase family. Homodimer.

Its subcellular location is the cytoplasm. It carries out the reaction tRNA(Asn) + L-asparagine + ATP = L-asparaginyl-tRNA(Asn) + AMP + diphosphate + H(+). This chain is Asparagine--tRNA ligase, found in Borrelia garinii subsp. bavariensis (strain ATCC BAA-2496 / DSM 23469 / PBi) (Borreliella bavariensis).